The chain runs to 376 residues: tRNA-specific 2-thiouridylase MnmA (376 aa).

Residues 17-24 (GMSGGVDS) and Met43 each bind ATP. The interval 103–105 (NPD) is interaction with target base in tRNA. Residue Cys108 is the Nucleophile of the active site. Cys108 and Cys204 are joined by a disulfide. Gly132 provides a ligand contact to ATP. Positions 154-156 (KDQ) are interaction with tRNA. The active-site Cysteine persulfide intermediate is Cys204. An interaction with tRNA region spans residues 316 to 317 (RY).

The protein belongs to the MnmA/TRMU family.

It localises to the cytoplasm. The catalysed reaction is S-sulfanyl-L-cysteinyl-[protein] + uridine(34) in tRNA + AH2 + ATP = 2-thiouridine(34) in tRNA + L-cysteinyl-[protein] + A + AMP + diphosphate + H(+). In terms of biological role, catalyzes the 2-thiolation of uridine at the wobble position (U34) of tRNA, leading to the formation of s(2)U34. In Pseudomonas syringae pv. syringae (strain B728a), this protein is tRNA-specific 2-thiouridylase MnmA.